A 146-amino-acid polypeptide reads, in one-letter code: Hemoglobin subunit beta-1 (146 aa).

The region spanning 2 to 146 (KWTDKERAVI…VVSALGKQYC (145 aa)) is the Globin domain. Heme b-binding residues include His-63 and His-92.

This sequence belongs to the globin family. Heterotetramer of two alpha chains and two beta chains. As to expression, red blood cells.

Functionally, involved in oxygen transport from gills to the various peripheral tissues. This is Hemoglobin subunit beta-1 from Lycodes reticulatus (Arctic eelpout).